The primary structure comprises 605 residues: Protein Spindly (605 aa).

Met1 is subject to N-acetylmethionine. Residues 2–442 are a coiled coil; sequence EADIITNLRC…ELKLKYEPEE (441 aa). Ser513, Ser515, and Ser555 each carry phosphoserine. The segment at 544-580 is disordered; sequence ALSERSGNTPNSPRLAAESKLQTEVKEGKETSSKLEK. A compositionally biased stretch (basic and acidic residues) spans 564–580; it reads LQTEVKEGKETSSKLEK.

The protein belongs to the Spindly family. As to quaternary structure, interacts with KNTC1 and ZW10. These interactions appear weak and may be transient or indirect. Interacts with dynein intermediate chain and dynactin (DCTN1). Interacts with the catalytically active form of USP45. Monoubiquitinated with'Lys-48' linkage. Deubiquitinated by USP45.

The protein localises to the cytoplasm. It is found in the cytoskeleton. It localises to the microtubule organizing center. The protein resides in the centrosome. Its subcellular location is the chromosome. The protein localises to the centromere. It is found in the kinetochore. It localises to the nucleus. The protein resides in the spindle pole. In terms of biological role, required for the localization of dynein and dynactin to the mitotic kintochore. Dynein is believed to control the initial lateral interaction between the kinetochore and spindle microtubules and to facilitate the subsequent formation of end-on kinetochore-microtubule attachments mediated by the NDC80 complex. Also required for correct spindle orientation. Does not appear to be required for the removal of spindle assembly checkpoint (SAC) proteins from the kinetochore upon bipolar spindle attachment. Acts as an adapter protein linking the dynein motor complex to various cargos and converts dynein from a non-processive to a highly processive motor in the presence of dynactin. Facilitates the interaction between dynein and dynactin and activates dynein processivity (the ability to move along a microtubule for a long distance without falling off the track). Plays a role in cell migration. This Homo sapiens (Human) protein is Protein Spindly.